The following is a 104-amino-acid chain: Large ribosomal subunit protein uL23 (104 aa).

This sequence belongs to the universal ribosomal protein uL23 family. Part of the 50S ribosomal subunit. Contacts protein L29, and trigger factor when it is bound to the ribosome.

In terms of biological role, one of the early assembly proteins it binds 23S rRNA. One of the proteins that surrounds the polypeptide exit tunnel on the outside of the ribosome. Forms the main docking site for trigger factor binding to the ribosome. The chain is Large ribosomal subunit protein uL23 from Paraburkholderia phytofirmans (strain DSM 17436 / LMG 22146 / PsJN) (Burkholderia phytofirmans).